The sequence spans 1085 residues: Carbamoyl phosphate synthase large chain (1085 aa).

The carboxyphosphate synthetic domain stretch occupies residues Met1–Glu399. Positions 127, 167, 174, 206, 208, 213, 239, 240, 241, 283, and 297 each coordinate ATP. In terms of domain architecture, ATP-grasp 1 spans Lys131–Val326. Mg(2+) is bound by residues Gln283, Glu297, and Asn299. Positions 283, 297, and 299 each coordinate Mn(2+). The oligomerization domain stretch occupies residues Asn400–Asn552. The interval Lys553 to Phe951 is carbamoyl phosphate synthetic domain. The ATP-grasp 2 domain maps to Ser678–Val871. The ATP site is built by Arg714, Lys756, Leu758, Glu763, Gly788, Ile789, His790, Ser791, Gln830, and Glu842. Residues Gln830, Glu842, and Asn844 each contribute to the Mg(2+) site. Residues Gln830, Glu842, and Asn844 each contribute to the Mn(2+) site. Positions Asn952–Lys1085 constitute an MGS-like domain. Positions Asn952–Lys1085 are allosteric domain.

This sequence belongs to the CarB family. Composed of two chains; the small (or glutamine) chain promotes the hydrolysis of glutamine to ammonia, which is used by the large (or ammonia) chain to synthesize carbamoyl phosphate. Tetramer of heterodimers (alpha,beta)4. Requires Mg(2+) as cofactor. Mn(2+) serves as cofactor.

The catalysed reaction is hydrogencarbonate + L-glutamine + 2 ATP + H2O = carbamoyl phosphate + L-glutamate + 2 ADP + phosphate + 2 H(+). The enzyme catalyses hydrogencarbonate + NH4(+) + 2 ATP = carbamoyl phosphate + 2 ADP + phosphate + 2 H(+). The protein operates within amino-acid biosynthesis; L-arginine biosynthesis; carbamoyl phosphate from bicarbonate: step 1/1. It functions in the pathway pyrimidine metabolism; UMP biosynthesis via de novo pathway; (S)-dihydroorotate from bicarbonate: step 1/3. Functionally, large subunit of the glutamine-dependent carbamoyl phosphate synthetase (CPSase). CPSase catalyzes the formation of carbamoyl phosphate from the ammonia moiety of glutamine, carbonate, and phosphate donated by ATP, constituting the first step of 2 biosynthetic pathways, one leading to arginine and/or urea and the other to pyrimidine nucleotides. The large subunit (synthetase) binds the substrates ammonia (free or transferred from glutamine from the small subunit), hydrogencarbonate and ATP and carries out an ATP-coupled ligase reaction, activating hydrogencarbonate by forming carboxy phosphate which reacts with ammonia to form carbamoyl phosphate. This Helicobacter pylori (strain ATCC 700392 / 26695) (Campylobacter pylori) protein is Carbamoyl phosphate synthase large chain.